Reading from the N-terminus, the 205-residue chain is MKASLALLSLLTAFTSHSLKSPAVPPTVVQIQANTNLAIADGARQQIGSTLFYDPAYVQLTYPGGDVPQERGVCSDVVIRALRSQKVDLQKLVHEDMAKNFAEYPQKWKLKRPDSNIDHRRVPNLETWFSRHDKTRPTSKNPSDYQAGDIVSWRLDNGLAHIGVVSDGFARDGTPLVIHNIGAGAQEEDVLFNWRMVGHYRYFVK.

The first 18 residues, 1 to 18, serve as a signal peptide directing secretion; it reads MKASLALLSLLTAFTSHS.

This is an uncharacterized protein from Escherichia coli (strain K12).